The chain runs to 233 residues: Large ribosomal subunit protein uL1 (233 aa).

It belongs to the universal ribosomal protein uL1 family. In terms of assembly, part of the 50S ribosomal subunit.

In terms of biological role, binds directly to 23S rRNA. The L1 stalk is quite mobile in the ribosome, and is involved in E site tRNA release. Protein L1 is also a translational repressor protein, it controls the translation of the L11 operon by binding to its mRNA. The sequence is that of Large ribosomal subunit protein uL1 from Brucella anthropi (strain ATCC 49188 / DSM 6882 / CCUG 24695 / JCM 21032 / LMG 3331 / NBRC 15819 / NCTC 12168 / Alc 37) (Ochrobactrum anthropi).